A 72-amino-acid polypeptide reads, in one-letter code: Potassium channel toxin epsilon-KTx 1.1 (72 aa).

Positions 1 to 30 are cleaved as a signal peptide; sequence MKLSCGFLLILLVLSAMIATFSEVEAMKPS. Disulfide bonds link cysteine 34-cysteine 42, cysteine 37-cysteine 58, cysteine 41-cysteine 51, and cysteine 46-cysteine 56. The propeptide occupies 60-72; it reads GRSDLNDELEKYQ.

The protein belongs to the short scorpion toxin superfamily. Potassium channel inhibitor family. Epsilon-KTx 01 subfamily. Expressed by the venom gland.

It localises to the secreted. In terms of biological role, potassium channel blocker. At 3 uM, this toxin blocks voltage-independently voltage-gated potassium channels rKv1.2/KCNA2 (25%), hKv1.3/KCNA3 (27%), rKv4.2/KCND2 (25%), Kv10.1/KCNH1/EAG1 (15%), Kv11/hERG (12%), and Shaker-IR (10%). On hKv1.3/KCNA3, the IC(50) is 17.1 +-3.3 uM. The polypeptide is Potassium channel toxin epsilon-KTx 1.1 (Tityus serrulatus (Brazilian scorpion)).